Here is a 335-residue protein sequence, read N- to C-terminus: GTPase Obg (335 aa).

Residues 1–159 (MKFVDSASIR…REIGLELSIM (159 aa)) form the Obg domain. Residues 160-332 (ADIGLLGMPN…LVAGLFKLVK (173 aa)) enclose the OBG-type G domain. GTP is bound by residues 166–173 (GMPNAGKS), 191–195 (FTTLH), 212–215 (DIPG), 282–285 (NKMD), and 313–315 (SAL). Positions 173 and 193 each coordinate Mg(2+).

This sequence belongs to the TRAFAC class OBG-HflX-like GTPase superfamily. OBG GTPase family. As to quaternary structure, monomer. Mg(2+) serves as cofactor.

The protein resides in the cytoplasm. Functionally, an essential GTPase which binds GTP, GDP and possibly (p)ppGpp with moderate affinity, with high nucleotide exchange rates and a fairly low GTP hydrolysis rate. Plays a role in control of the cell cycle, stress response, ribosome biogenesis and in those bacteria that undergo differentiation, in morphogenesis control. The chain is GTPase Obg from Ruthia magnifica subsp. Calyptogena magnifica.